The following is a 1065-amino-acid chain: Tubulin glycylase 3C (1065 aa).

Disordered stretches follow at residues 1 to 146 (MSSL…REDK), 158 to 182 (IREQ…TKSK), 301 to 326 (STQK…DIAK), 341 to 360 (EKKR…KEQL), 381 to 482 (FFVD…GNGS), and 708 to 755 (NKQK…EKQM). Residues 23–53 (QEGNQEDLNNQNDHNLNNNELDSLSSPPSDN) are compositionally biased toward low complexity. Residues 54-63 (YNEEEFEQED) are compositionally biased toward acidic residues. Over residues 73–92 (QNASQNNISQTQRISQTQLP) the composition is skewed to polar residues. A compositionally biased stretch (basic and acidic residues) spans 122-146 (LMEKKKKEQEEKEKKELKLKKREDK). Residues 166 to 179 (LESQTEQSDHSNVT) are compositionally biased toward polar residues. The span at 313–326 (EGDKEKDDKKDIAK) shows a compositional bias: basic and acidic residues. Over residues 385-403 (VPEKKPKKEKKKNESKEDN) the composition is skewed to basic and acidic residues. The span at 404 to 423 (IQITSPKLNSTKSLSSQITR) shows a compositional bias: polar residues. Over residues 424-450 (KTNDAKKVEKLPKIKDSNKENHSKERN) the composition is skewed to basic and acidic residues. A compositionally biased stretch (acidic residues) spans 451-479 (EDNEEGDDGEYECDEGDEGASDGEDEDDG). The TTL domain occupies 633–1009 (YFEKDPDIEK…DYGMEKSKKA (377 aa)). Over residues 709-721 (KQKPKKKKKKSKK) the composition is skewed to basic residues. The segment covering 722 to 733 (DKQQGDTEKKEE) has biased composition (basic and acidic residues). Residues 734–754 (EEGEAEDEEEDEEDEEEEEKQ) are compositionally biased toward acidic residues. Residues 821-824 (QKYI), Lys834, and Asp836 each bind ATP.

It localises to the cell projection. Its subcellular location is the cilium. The protein resides in the cytoplasm. It is found in the cytoskeleton. The protein localises to the cilium axoneme. Probable glycylase which modifies tubulin, generating side chains of glycine on the gamma-carboxyl groups of specific glutamate residues within the C-terminal tail of tubulin. The polypeptide is Tubulin glycylase 3C (TTLL3C) (Tetrahymena thermophila (strain SB210)).